Consider the following 356-residue polypeptide: Phosphate acyltransferase (356 aa).

It belongs to the PlsX family. As to quaternary structure, homodimer. Probably interacts with PlsY.

The protein localises to the cytoplasm. It carries out the reaction a fatty acyl-[ACP] + phosphate = an acyl phosphate + holo-[ACP]. It participates in lipid metabolism; phospholipid metabolism. Functionally, catalyzes the reversible formation of acyl-phosphate (acyl-PO(4)) from acyl-[acyl-carrier-protein] (acyl-ACP). This enzyme utilizes acyl-ACP as fatty acyl donor, but not acyl-CoA. This is Phosphate acyltransferase from Shigella sonnei (strain Ss046).